Here is a 334-residue protein sequence, read N- to C-terminus: Ornithine carbamoyltransferase subunit I (334 aa).

Carbamoyl phosphate contacts are provided by residues 56-59 (STRT), Q83, R107, and 134-137 (HPTQ). Residues N168, D232, and 236-237 (SM) each bind L-ornithine. C274 serves as a coordination point for Zn(2+). Carbamoyl phosphate-binding positions include 274–275 (CL) and R320.

Belongs to the aspartate/ornithine carbamoyltransferase superfamily. OTCase family. In terms of assembly, in E.coli strain K12, trimer of identical or non-identical chains are composed of ArgI (I) and/or ArgF (F). The trimer has the following composition: FFI, FFF, FII, III. E.coli strains B and W, which are known to contain only ArgI, produce only a trimer of identical chains (III).

The protein localises to the cytoplasm. It carries out the reaction carbamoyl phosphate + L-ornithine = L-citrulline + phosphate + H(+). The protein operates within amino-acid biosynthesis; L-arginine biosynthesis; L-arginine from L-ornithine and carbamoyl phosphate: step 1/3. Its activity is regulated as follows. Reversely inhibited by N-(N-Sulfodiaminophosphinyl)-L-ornithine. Zinc is an allosteric regulator of the substrate-bound enzyme and a competitive inhibitor of the free enzyme. Reversibly catalyzes the transfer of the carbamoyl group from carbamoyl phosphate (CP) to the N(epsilon) atom of ornithine (ORN) to produce L-citrulline, which is a substrate for argininosuccinate synthetase, the enzyme involved in the final step in arginine biosynthesis. In Escherichia coli (strain K12), this protein is Ornithine carbamoyltransferase subunit I.